We begin with the raw amino-acid sequence, 831 residues long: Protein translocase subunit SecA (831 aa).

ATP is bound by residues Gln-88, 106–110, and Asp-495; that span reads GEGKT. Zn(2+)-binding residues include Cys-816, Cys-818, Cys-827, and Cys-828.

Belongs to the SecA family. As to quaternary structure, monomer and homodimer. Part of the essential Sec protein translocation apparatus which comprises SecA, SecYEG and auxiliary proteins SecDF-YajC and YidC. Zn(2+) is required as a cofactor.

The protein localises to the cell membrane. It localises to the cytoplasm. It catalyses the reaction ATP + H2O + cellular proteinSide 1 = ADP + phosphate + cellular proteinSide 2.. Functionally, part of the Sec protein translocase complex. Interacts with the SecYEG preprotein conducting channel. Has a central role in coupling the hydrolysis of ATP to the transfer of proteins into and across the cell membrane, serving as an ATP-driven molecular motor driving the stepwise translocation of polypeptide chains across the membrane. The polypeptide is Protein translocase subunit SecA (Lawsonia intracellularis (strain PHE/MN1-00)).